The sequence spans 221 residues: CASP-like protein 2U10 (221 aa).

The interval 1–22 (MDSSSKPMNGSAGGSPVGDERK) is disordered. Residues 1 to 31 (MDSSSKPMNGSAGGSPVGDERKMGDHEHEFR) are Cytoplasmic-facing. A helical transmembrane segment spans residues 32–52 (ISIILLRSFLLVLVIISEALM). Residues 53 to 91 (VTDRETGSVPLPFFGLPRPVFVTKTAKYELVTGLKFYVD) lie on the Extracellular side of the membrane. A helical transmembrane segment spans residues 92-112 (ALGVVIGYTVLHLLFNIGLVA). The Cytoplasmic segment spans residues 113-122 (TKGTVVDCKS). The helical transmembrane segment at 123–143 (VAWISFIADSMMGYLLLSSAA) threads the bilayer. Residues 144–174 (VATEIGYLAEEGAPAVLWRKVCNAFGYFCTV) are Extracellular-facing. The chain crosses the membrane as a helical span at residues 175–195 (YAISVVICFIAALVSFVVVGI). Residues 196–221 (SAYHLFRLYGIQQQAAREKEKLSAEM) are Cytoplasmic-facing.

This sequence belongs to the Casparian strip membrane proteins (CASP) family. In terms of assembly, homodimer and heterodimers.

The protein localises to the cell membrane. The polypeptide is CASP-like protein 2U10 (Selaginella moellendorffii (Spikemoss)).